Here is a 1066-residue protein sequence, read N- to C-terminus: Beta-galactosidase (1066 aa).

Substrate contacts are provided by Asn110 and Asp209. Asp209 contributes to the Na(+) binding site. Residues Glu432, His434, and Glu477 each coordinate Mg(2+). Substrate is bound by residues Glu477 and Glu553 to His556. Glu477 functions as the Proton donor in the catalytic mechanism. Catalysis depends on Glu553, which acts as the Nucleophile. Asn613 serves as a coordination point for Mg(2+). Positions 617 and 620 each coordinate Na(+). Substrate is bound by residues Asn620 and Trp1041.

Belongs to the glycosyl hydrolase 2 family. In terms of assembly, homotetramer. Requires Mg(2+) as cofactor. Na(+) serves as cofactor.

The catalysed reaction is Hydrolysis of terminal non-reducing beta-D-galactose residues in beta-D-galactosides.. This is Beta-galactosidase from Yersinia pseudotuberculosis serotype IB (strain PB1/+).